The chain runs to 180 residues: MTEELKLMGANRRDQLLLWLKESKSPLTGGELAKKANVSRQVIVQDISLLKAKNVPIIATSQGYVYMDAAAQQHQQAERIIACLHGPERTEEELQLIVDEGVTVKDVKIEHPVYGDLTAAIQVGTRKEVSHFIKKINSTNAAYLSQLTDGVHLHTLTAPDEHRIDQACQALEEAGILIKD.

Homodimer.

Functionally, in the presence of nicotinic acid represses transcription of the nadBCA and nifS-nadR operons. Also binds to DNA upstream of the niaP gene, probably regulating it as well. May bind nicotinic acid. The chain is Transcription repressor NadR (nadR) from Bacillus subtilis (strain 168).